Here is a 156-residue protein sequence, read N- to C-terminus: Movement protein P17 (156 aa).

Residues 38-54 (AEDAEEEAIAAQEELEF) are homodimerization. Disordered regions lie at residues 55–80 (PEDEAQARHSCLQRTTSWATPKEVSP) and 131–156 (AKYHPSSPTSTSSKLRRAAPKLIKRG). Residues 57–156 (DEAQARHSCL…RAAPKLIKRG (100 aa)) form an RNA-binding region. Residues serine 71, serine 79, serine 137, and serine 140 each carry the phosphoserine modification. The segment covering 144–156 (KLRRAAPKLIKRG) has biased composition (basic residues).

It belongs to the polerovirus movement protein family. As to quaternary structure, homodimer. Heterodimer with movement protein P3a. In terms of processing, expressed as a nonphosphorylated 20kDa form and a phosphorylated 22kDa form. Phosphorylated by a host PKC-related kinase. Serine phosphorylation is required for plamodesma targeting.

It is found in the host cell junction. The protein resides in the host plasmodesma. The protein localises to the host mitochondrion outer membrane. Its subcellular location is the host Golgi apparatus. It localises to the host chloroplast envelope. In terms of biological role, together with movement protein P3a, facilitates long-distance movement of virions in host. Transports viral genome to neighboring plant cells directly through plasmosdesmata, without any budding. The movement protein allows efficient cell to cell propagation, by bypassing the host cell wall barrier. Binds ssRNA. The chain is Movement protein P17 from Solanum tuberosum (Potato).